Here is a 149-residue protein sequence, read N- to C-terminus: Nucleoside diphosphate kinase (149 aa).

ATP contacts are provided by Lys-9, Phe-57, Arg-85, Thr-91, Arg-102, and Asn-112. His-115 serves as the catalytic Pros-phosphohistidine intermediate.

Belongs to the NDK family. As to quaternary structure, homotetramer. Mg(2+) is required as a cofactor.

It localises to the cytoplasm. The catalysed reaction is a 2'-deoxyribonucleoside 5'-diphosphate + ATP = a 2'-deoxyribonucleoside 5'-triphosphate + ADP. The enzyme catalyses a ribonucleoside 5'-diphosphate + ATP = a ribonucleoside 5'-triphosphate + ADP. Major role in the synthesis of nucleoside triphosphates other than ATP. The ATP gamma phosphate is transferred to the NDP beta phosphate via a ping-pong mechanism, using a phosphorylated active-site intermediate. The polypeptide is Nucleoside diphosphate kinase (Heliobacterium modesticaldum (strain ATCC 51547 / Ice1)).